The chain runs to 172 residues: Protein LHCP TRANSLOCATION DEFECT (172 aa).

Residues 1-28 (MASIPCTFQLSARASSASAAAAARRSPR) constitute a chloroplast transit peptide. The stretch at 114–146 (PVDILLMLAASEGDKPKLEELLRAGAKYDVKDV) is one ANK repeat.

The protein resides in the plastid. It is found in the chloroplast. Its function is as follows. Involved in the import of light-harvesting complex proteins (LHCP) and subsequent routing of these proteins to the chloroplast signal recognition particle (SRP) pathway. The chain is Protein LHCP TRANSLOCATION DEFECT (LTD) from Oryza sativa subsp. indica (Rice).